The primary structure comprises 441 residues: tRNA modification GTPase MnmE (441 aa).

The (6S)-5-formyl-5,6,7,8-tetrahydrofolate site is built by R21, E79, and K118. Residues 214–370 (GFKIAIVGKP…LEGYLKTQDT (157 aa)) form the TrmE-type G domain. GTP is bound by residues 224–229 (NVGKSS), 243–249 (SDEAGTT), and 268–271 (DTAG). Positions 228 and 249 each coordinate Mg(2+). Position 441 (K441) interacts with (6S)-5-formyl-5,6,7,8-tetrahydrofolate.

Belongs to the TRAFAC class TrmE-Era-EngA-EngB-Septin-like GTPase superfamily. TrmE GTPase family. As to quaternary structure, homodimer. Heterotetramer of two MnmE and two MnmG subunits. It depends on K(+) as a cofactor.

It is found in the cytoplasm. Its function is as follows. Exhibits a very high intrinsic GTPase hydrolysis rate. Involved in the addition of a carboxymethylaminomethyl (cmnm) group at the wobble position (U34) of certain tRNAs, forming tRNA-cmnm(5)s(2)U34. This chain is tRNA modification GTPase MnmE, found in Campylobacter concisus (strain 13826).